We begin with the raw amino-acid sequence, 61 residues long: Truncated 3-beta hydroxy-5-ene steroid dehydrogenase homolog (61 aa).

Belongs to the 3-beta-HSD family.

The sequence is that of Truncated 3-beta hydroxy-5-ene steroid dehydrogenase homolog from Variola virus (isolate Human/India/Ind3/1967) (VARV).